The chain runs to 533 residues: NAD(P)H-quinone oxidoreductase chain 4 2 (533 aa).

The next 14 helical transmembrane spans lie at F5–L25, V33–W53, L86–W106, L114–D134, L135–I155, F168–F188, A208–F228, S242–I262, F276–F296, I310–G330, A331–V351, A384–L404, V416–M436, and T462–A482.

It belongs to the complex I subunit 4 family.

It is found in the cellular thylakoid membrane. The enzyme catalyses a plastoquinone + NADH + (n+1) H(+)(in) = a plastoquinol + NAD(+) + n H(+)(out). It carries out the reaction a plastoquinone + NADPH + (n+1) H(+)(in) = a plastoquinol + NADP(+) + n H(+)(out). NDH-1 shuttles electrons from NAD(P)H, via FMN and iron-sulfur (Fe-S) centers, to quinones in the respiratory chain. The immediate electron acceptor for the enzyme in this species is believed to be plastoquinone. Couples the redox reaction to proton translocation (for every two electrons transferred, four hydrogen ions are translocated across the cytoplasmic membrane), and thus conserves the redox energy in a proton gradient. The polypeptide is NAD(P)H-quinone oxidoreductase chain 4 2 (Thermosynechococcus vestitus (strain NIES-2133 / IAM M-273 / BP-1)).